The primary structure comprises 82 residues: Putative membrane protein insertion efficiency factor (82 aa).

The protein belongs to the UPF0161 family.

The protein localises to the cell membrane. Its function is as follows. Could be involved in insertion of integral membrane proteins into the membrane. In Streptococcus uberis (strain ATCC BAA-854 / 0140J), this protein is Putative membrane protein insertion efficiency factor.